The following is a 425-amino-acid chain: E3 ubiquitin-protein ligase CBLL2 (425 aa).

The RING-type zinc finger occupies 57-97; that stretch reads CDKCDLPIKIYGRIIPCKHAFCYHCANLYDKVGYKVCPRCR. The HYB domain stretch occupies residues 96-154; sequence CRYPVLRIEAHKRGSVFMCSIVQQCKRTYLSQKSLQAHIKRRHKRARKQVTSASLEKVR. The C2H2-type zinc-finger motif lies at 112-138; that stretch reads FMCSIVQQCKRTYLSQKSLQAHIKRRH. 2 disordered regions span residues 241–297 and 382–425; these read DHIQ…HQMP and TDAM…HRRY. The span at 398-408 shows a compositional bias: pro residues; sequence PCPPTRSPPPS. A compositionally biased stretch (basic residues) spans 412–425; it reads GRSHHSHQRRHRRY.

Homodimer. In terms of tissue distribution, exclusively expressed in testis and sperm, including spermatocytes, round and elongated spermatids, and Leydig cells.

It is found in the cytoplasm. It catalyses the reaction S-ubiquitinyl-[E2 ubiquitin-conjugating enzyme]-L-cysteine + [acceptor protein]-L-lysine = [E2 ubiquitin-conjugating enzyme]-L-cysteine + N(6)-ubiquitinyl-[acceptor protein]-L-lysine.. It participates in protein modification; protein ubiquitination. Its function is as follows. E3 ubiquitin ligase catalyzing the covalent attachment of ubiquitin moieties onto substrate proteins. May operate on tyrosine-phosphorylated SRC substrates. This chain is E3 ubiquitin-protein ligase CBLL2, found in Homo sapiens (Human).